A 123-amino-acid chain; its full sequence is Ribonuclease P protein component (123 aa).

This sequence belongs to the RnpA family. In terms of assembly, consists of a catalytic RNA component (M1 or rnpB) and a protein subunit.

The catalysed reaction is Endonucleolytic cleavage of RNA, removing 5'-extranucleotides from tRNA precursor.. In terms of biological role, RNaseP catalyzes the removal of the 5'-leader sequence from pre-tRNA to produce the mature 5'-terminus. It can also cleave other RNA substrates such as 4.5S RNA. The protein component plays an auxiliary but essential role in vivo by binding to the 5'-leader sequence and broadening the substrate specificity of the ribozyme. This Streptococcus pneumoniae serotype 4 (strain ATCC BAA-334 / TIGR4) protein is Ribonuclease P protein component.